The chain runs to 285 residues: GTP cyclohydrolase 1 type 2 homolog (285 aa).

The a divalent metal cation site is built by H65, H66, D104, H230, and E234.

Belongs to the GTP cyclohydrolase I type 2/NIF3 family. As to quaternary structure, homohexamer.

The chain is GTP cyclohydrolase 1 type 2 homolog from Streptomyces coelicolor (strain ATCC BAA-471 / A3(2) / M145).